The chain runs to 453 residues: Glutamate--tRNA ligase 2 (453 aa).

The short motif at 10–20 (PSPTGFLHIGG) is the 'HIGH' region element. The 'KMSKS' region motif lies at 232 to 236 (KLSKR). K235 contacts ATP.

This sequence belongs to the class-I aminoacyl-tRNA synthetase family. Glutamate--tRNA ligase type 1 subfamily. In terms of assembly, monomer.

The protein localises to the cytoplasm. It carries out the reaction tRNA(Glu) + L-glutamate + ATP = L-glutamyl-tRNA(Glu) + AMP + diphosphate. In terms of biological role, catalyzes the attachment of glutamate to tRNA(Glu) in a two-step reaction: glutamate is first activated by ATP to form Glu-AMP and then transferred to the acceptor end of tRNA(Glu). This Wolbachia sp. subsp. Brugia malayi (strain TRS) protein is Glutamate--tRNA ligase 2.